Consider the following 102-residue polypeptide: S-phase delaying protein 2 (102 aa).

The segment at 43–62 (FPSYHKDQTDRNELPQQKHD) is disordered. Residues 46–62 (YHKDQTDRNELPQQKHD) show a composition bias toward basic and acidic residues.

This sequence belongs to the DIF1/spd1 family.

Its subcellular location is the cytoplasm. The protein resides in the nucleus. In terms of biological role, regulates the ribonucleotide reductase activity. The protein is S-phase delaying protein 2 (spd2) of Schizosaccharomyces pombe (strain 972 / ATCC 24843) (Fission yeast).